Consider the following 228-residue polypeptide: Max-interacting protein 1 (228 aa).

2 disordered regions span residues 29–76 (GYAS…NELE) and 161–228 (IGST…SFTS). Residues 43 to 56 (QHSKPPRRLSRAQK) show a composition bias toward basic residues. Residues 57-70 (HSSGSSNTSTANRS) show a composition bias toward polar residues. In terms of domain architecture, bHLH spans 67–119 (ANRSTHNELEKNRRAHLRLCLERLKVLIPLGPDCTRHTTLGLLNKAKAHIKKL). Residues 173-183 (EREEIEVDVES) show a composition bias toward acidic residues. The segment covering 216–228 (GYSSASVKLSFTS) has biased composition (polar residues).

As to quaternary structure, interacts with SMC3. Efficient DNA binding requires dimerization with another bHLH protein. Binds DNA as a heterodimer with MAX. Interacts with RNF17. High levels found in the brain, heart and lung while lower levels are seen in the liver, kidney and skeletal muscle.

The protein resides in the nucleus. Functionally, transcriptional repressor. MXI1 binds with MAX to form a sequence-specific DNA-binding protein complex which recognizes the core sequence 5'-CAC[GA]TG-3'. MXI1 thus antagonizes MYC transcriptional activity by competing for MAX. The sequence is that of Max-interacting protein 1 (MXI1) from Homo sapiens (Human).